Consider the following 562-residue polypeptide: Septation ring formation regulator EzrA (562 aa).

The Extracellular portion of the chain corresponds to 1-2 (ME). The chain crosses the membrane as a helical span at residues 3 to 21 (FVIGLLIVLLALFAAGYFF). Residues 22-562 (RKKIYAEIDR…VEKIKADISA (541 aa)) are Cytoplasmic-facing. Coiled-coil stretches lie at residues 377–425 (YSLL…LKKT) and 470–497 (MEEAGAHLKQAEDIVNRASRESEELVEQ).

This sequence belongs to the EzrA family. Post-translationally, may be degraded by FtsH protease.

The protein resides in the cell membrane. The protein localises to the membrane raft. Its function is as follows. Negative regulator of FtsZ ring formation; modulates the frequency and position of FtsZ ring formation. Inhibits FtsZ ring formation at polar sites. Interacts either with FtsZ or with one of its binding partners to promote depolymerization. The protein is Septation ring formation regulator EzrA of Bacillus subtilis (strain 168).